The sequence spans 76 residues: uncharacterized protein (76 aa).

The 55-residue stretch at 15–69 (VRIVRKEQNLRQDELAGVAGVGLRFIVDLEAGKPTAQIGKVLQVLQTLGCSIDIL) folds into the HTH cro/C1-type domain. Residues 26–45 (QDELAGVAGVGLRFIVDLEA) constitute a DNA-binding region (H-T-H motif).

This is an uncharacterized protein from Sinorhizobium fredii (strain NBRC 101917 / NGR234).